The following is a 405-amino-acid chain: Corticosteroid-binding globulin (405 aa).

The N-terminal stretch at 1 to 22 is a signal peptide; the sequence is MPLLLYTCLLWLSTSGLWTVQA. N-linked (GlcNAc...) asparagine glycans are attached at residues N26, N31, N96, and N260. N286 contacts cortisol. N-linked (GlcNAc...) asparagine glycosylation is found at N330 and N369. Residue W393 participates in cortisol binding.

Belongs to the serpin family. Expressed by the liver; secreted in plasma.

It is found in the secreted. In terms of biological role, major transport protein for glucocorticoids and progestins in the blood of almost all vertebrate species. The sequence is that of Corticosteroid-binding globulin (SERPINA6) from Pongo abelii (Sumatran orangutan).